The chain runs to 149 residues: Flagellar assembly factor FliW (149 aa).

The protein belongs to the FliW family. In terms of assembly, interacts with translational regulator CsrA and flagellin(s).

It localises to the cytoplasm. In terms of biological role, acts as an anti-CsrA protein, binds CsrA and prevents it from repressing translation of its target genes, one of which is flagellin. Binds to flagellin and participates in the assembly of the flagellum. The chain is Flagellar assembly factor FliW from Thermotoga sp. (strain RQ2).